The primary structure comprises 258 residues: Acyl-[acyl-carrier-protein]--UDP-N-acetylglucosamine O-acyltransferase (258 aa).

The protein belongs to the transferase hexapeptide repeat family. LpxA subfamily. Homotrimer.

Its subcellular location is the cytoplasm. The enzyme catalyses a (3R)-hydroxyacyl-[ACP] + UDP-N-acetyl-alpha-D-glucosamine = a UDP-3-O-[(3R)-3-hydroxyacyl]-N-acetyl-alpha-D-glucosamine + holo-[ACP]. Its pathway is glycolipid biosynthesis; lipid IV(A) biosynthesis; lipid IV(A) from (3R)-3-hydroxytetradecanoyl-[acyl-carrier-protein] and UDP-N-acetyl-alpha-D-glucosamine: step 1/6. In terms of biological role, involved in the biosynthesis of lipid A, a phosphorylated glycolipid that anchors the lipopolysaccharide to the outer membrane of the cell. This is Acyl-[acyl-carrier-protein]--UDP-N-acetylglucosamine O-acyltransferase from Neisseria meningitidis serogroup C / serotype 2a (strain ATCC 700532 / DSM 15464 / FAM18).